We begin with the raw amino-acid sequence, 289 residues long: D-alanine aminotransferase (289 aa).

Residue tyrosine 31 participates in substrate binding. Residue arginine 50 participates in pyridoxal 5'-phosphate binding. The substrate site is built by arginine 99 and histidine 101. Catalysis depends on lysine 147, which acts as the Proton acceptor. Residue lysine 147 is modified to N6-(pyridoxal phosphate)lysine. A pyridoxal 5'-phosphate-binding site is contributed by glutamate 179.

This sequence belongs to the class-IV pyridoxal-phosphate-dependent aminotransferase family. Homodimer. The cofactor is pyridoxal 5'-phosphate.

It carries out the reaction D-alanine + 2-oxoglutarate = D-glutamate + pyruvate. Its function is as follows. Acts on the D-isomers of alanine, leucine, aspartate, glutamate, aminobutyrate, norvaline and asparagine. The enzyme transfers an amino group from a substrate D-amino acid to the pyridoxal phosphate cofactor to form pyridoxamine and an alpha-keto acid in the first half-reaction. The second half-reaction is the reverse of the first, transferring the amino group from the pyridoxamine to a second alpha-keto acid to form the product D-amino acid via a ping-pong mechanism. This is an important process in the formation of D-alanine and D-glutamate, which are essential bacterial cell wall components. The sequence is that of D-alanine aminotransferase (dat) from Listeria monocytogenes serotype 4b (strain F2365).